A 372-amino-acid polypeptide reads, in one-letter code: Aminodeoxyfutalosine synthase (372 aa).

Residues 53–292 enclose the Radical SAM core domain; sequence HKTYFVHSIR…VARLYLDNFP (240 aa). Residues Cys69, Cys73, and Cys76 each coordinate [4Fe-4S] cluster.

The protein belongs to the radical SAM superfamily. MqnE family. [4Fe-4S] cluster serves as cofactor.

It carries out the reaction 3-[(1-carboxyvinyl)-oxy]benzoate + S-adenosyl-L-methionine + H2O = 6-amino-6-deoxyfutalosine + hydrogencarbonate + L-methionine + H(+). The protein operates within quinol/quinone metabolism; menaquinone biosynthesis. Functionally, radical SAM enzyme that catalyzes the addition of the adenosyl radical to the double bond of 3-[(1-carboxyvinyl)oxy]benzoate, leading to aminodeoxyfutalosine (AFL), a key intermediate in the formation of menaquinone (MK, vitamin K2) from chorismate. The polypeptide is Aminodeoxyfutalosine synthase (Thermus thermophilus (strain ATCC 27634 / DSM 579 / HB8)).